The primary structure comprises 132 residues: Small ribosomal subunit protein uS11 (132 aa).

Belongs to the universal ribosomal protein uS11 family. As to quaternary structure, part of the 30S ribosomal subunit. Interacts with proteins S7 and S18. Binds to IF-3.

Located on the platform of the 30S subunit, it bridges several disparate RNA helices of the 16S rRNA. Forms part of the Shine-Dalgarno cleft in the 70S ribosome. The sequence is that of Small ribosomal subunit protein uS11 from Cyanothece sp. (strain PCC 7425 / ATCC 29141).